Reading from the N-terminus, the 245-residue chain is 1-(5-phosphoribosyl)-5-[(5-phosphoribosylamino)methylideneamino] imidazole-4-carboxamide isomerase (245 aa).

D7 acts as the Proton acceptor in catalysis. The Proton donor role is filled by D129.

This sequence belongs to the HisA/HisF family.

It is found in the cytoplasm. The enzyme catalyses 1-(5-phospho-beta-D-ribosyl)-5-[(5-phospho-beta-D-ribosylamino)methylideneamino]imidazole-4-carboxamide = 5-[(5-phospho-1-deoxy-D-ribulos-1-ylimino)methylamino]-1-(5-phospho-beta-D-ribosyl)imidazole-4-carboxamide. The protein operates within amino-acid biosynthesis; L-histidine biosynthesis; L-histidine from 5-phospho-alpha-D-ribose 1-diphosphate: step 4/9. The chain is 1-(5-phosphoribosyl)-5-[(5-phosphoribosylamino)methylideneamino] imidazole-4-carboxamide isomerase from Shewanella amazonensis (strain ATCC BAA-1098 / SB2B).